We begin with the raw amino-acid sequence, 346 residues long: GTPase Obg (346 aa).

The Obg domain maps to 1–158 (MKFLDQVKIY…RAIWLRLKLI (158 aa)). The OBG-type G domain occupies 159–327 (ADVGLVGLPN…LLREAFALVR (169 aa)). GTP contacts are provided by residues 165–172 (GLPNAGKS), 190–194 (FTTLA), 212–215 (DIPG), 279–282 (NKID), and 308–310 (SGF). Residues Ser172 and Thr192 each contribute to the Mg(2+) site.

This sequence belongs to the TRAFAC class OBG-HflX-like GTPase superfamily. OBG GTPase family. Monomer. Mg(2+) serves as cofactor.

The protein resides in the cytoplasm. An essential GTPase which binds GTP, GDP and possibly (p)ppGpp with moderate affinity, with high nucleotide exchange rates and a fairly low GTP hydrolysis rate. Plays a role in control of the cell cycle, stress response, ribosome biogenesis and in those bacteria that undergo differentiation, in morphogenesis control. In Phenylobacterium zucineum (strain HLK1), this protein is GTPase Obg.